The following is a 703-amino-acid chain: Elongation factor G 1 (703 aa).

The tr-type G domain occupies 8–290 (ERYRNIGISA…AVIDFLPSPV (283 aa)). Residues 17–24 (AHIDAGKT), 88–92 (DTPGH), and 142–145 (NKMD) contribute to the GTP site.

This sequence belongs to the TRAFAC class translation factor GTPase superfamily. Classic translation factor GTPase family. EF-G/EF-2 subfamily.

Its subcellular location is the cytoplasm. Catalyzes the GTP-dependent ribosomal translocation step during translation elongation. During this step, the ribosome changes from the pre-translocational (PRE) to the post-translocational (POST) state as the newly formed A-site-bound peptidyl-tRNA and P-site-bound deacylated tRNA move to the P and E sites, respectively. Catalyzes the coordinated movement of the two tRNA molecules, the mRNA and conformational changes in the ribosome. This chain is Elongation factor G 1, found in Ralstonia nicotianae (strain ATCC BAA-1114 / GMI1000) (Ralstonia solanacearum).